Reading from the N-terminus, the 347-residue chain is GMP reductase (347 aa).

An NADP(+)-binding site is contributed by 108–131; the sequence is ADFEKTKQILDLNPALNFVCIDVA. The K(+) site is built by Gly-181 and Gly-183. The active-site Thioimidate intermediate is the Cys-186. 216–239 lines the NADP(+) pocket; the sequence is IISDGGCTTPGDVAKAFGGGADFV.

The protein belongs to the IMPDH/GMPR family. GuaC type 1 subfamily. As to quaternary structure, homotetramer.

The catalysed reaction is IMP + NH4(+) + NADP(+) = GMP + NADPH + 2 H(+). Catalyzes the irreversible NADPH-dependent deamination of GMP to IMP. It functions in the conversion of nucleobase, nucleoside and nucleotide derivatives of G to A nucleotides, and in maintaining the intracellular balance of A and G nucleotides. The protein is GMP reductase of Escherichia coli O157:H7.